We begin with the raw amino-acid sequence, 149 residues long: Active regulator of SIRT1 (149 aa).

The interval 1-64 is disordered; sequence MSVSLLRKGL…GLRHDQKATA (64 aa). Basic and acidic residues predominate over residues 8–19; it reads KGLDLLREERSG. The span at 30–41 shows a compositional bias: low complexity; that stretch reads SSKPKPCLSSSK. Residues 43-52 are compositionally biased toward basic residues; the sequence is GMRKQLRRLK.

This sequence belongs to the AROS family. Part of the small subunit (SSU) processome, composed of more than 70 proteins and the RNA chaperone small nucleolar RNA (snoRNA) U3.

The protein resides in the nucleus. It localises to the nucleolus. In terms of biological role, part of the small subunit (SSU) processome, first precursor of the small eukaryotic ribosomal subunit. During the assembly of the SSU processome in the nucleolus, many ribosome biogenesis factors, an RNA chaperone and ribosomal proteins associate with the nascent pre-rRNA and work in concert to generate RNA folding, modifications, rearrangements and cleavage as well as targeted degradation of pre-ribosomal RNA by the RNA exosome. Acts as a chaperone that specifically mediates the integration of RPS19 in state post-A1. Direct regulator of SIRT1. This chain is Active regulator of SIRT1 (rps19bp1), found in Xenopus tropicalis (Western clawed frog).